Here is an 832-residue protein sequence, read N- to C-terminus: Protein P (832 aa).

Residues Met1 to Gln177 are terminal protein domain (TP). The tract at residues Glu178–Leu335 is spacer. Residues Phe186 to Ser229 are disordered. Positions Glu336–Gln679 are polymerase/reverse transcriptase domain (RT). In terms of domain architecture, Reverse transcriptase spans Glu346 to Ile589. Residues Asp418, Asp540, and Asp541 each contribute to the Mg(2+) site.

Belongs to the hepadnaviridae P protein family.

It carries out the reaction DNA(n) + a 2'-deoxyribonucleoside 5'-triphosphate = DNA(n+1) + diphosphate. The catalysed reaction is Endonucleolytic cleavage to 5'-phosphomonoester.. Its activity is regulated as follows. Activated by host HSP70 and HSP40 in vitro to be able to bind the epsilon loop of the pgRNA. Because deletion of the RNase H region renders the protein partly chaperone-independent, the chaperones may be needed indirectly to relieve occlusion of the RNA-binding site by this domain. Inhibited by several reverse-transcriptase inhibitors: Lamivudine, Adefovir and Entecavir. Multifunctional enzyme that converts the viral RNA genome into dsDNA in viral cytoplasmic capsids. This enzyme displays a DNA polymerase activity that can copy either DNA or RNA templates, and a ribonuclease H (RNase H) activity that cleaves the RNA strand of RNA-DNA heteroduplexes in a partially processive 3'- to 5'-endonucleasic mode. Neo-synthesized pregenomic RNA (pgRNA) are encapsidated together with the P protein, and reverse-transcribed inside the nucleocapsid. Initiation of reverse-transcription occurs first by binding the epsilon loop on the pgRNA genome, and is initiated by protein priming, thereby the 5'-end of (-)DNA is covalently linked to P protein. Partial (+)DNA is synthesized from the (-)DNA template and generates the relaxed circular DNA (RC-DNA) genome. After budding and infection, the RC-DNA migrates in the nucleus, and is converted into a plasmid-like covalently closed circular DNA (cccDNA). The activity of P protein does not seem to be necessary for cccDNA generation, and is presumably released from (+)DNA by host nuclear DNA repair machinery. The polypeptide is Protein P (Hepatitis B virus genotype D (isolate Germany/1-91/1991) (HBV-D)).